Here is a 192-residue protein sequence, read N- to C-terminus: Adenylate kinase (192 aa).

10–18 (GVPGVGSTT) contributes to the ATP binding site.

It belongs to the archaeal adenylate kinase family. As to quaternary structure, monomer.

The protein localises to the cytoplasm. It catalyses the reaction AMP + ATP = 2 ADP. This is Adenylate kinase from Methanococcus vannielii (strain ATCC 35089 / DSM 1224 / JCM 13029 / OCM 148 / SB).